Reading from the N-terminus, the 126-residue chain is Histone H2B 1/2/3/4/6 (126 aa).

Low complexity predominate over residues 1 to 12 (MPEPAKSAPAPK). The disordered stretch occupies residues 1–36 (MPEPAKSAPAPKKGSKKAVTKTQKKGDKKRKKSRKE). Lysine 6 and lysine 13 each carry N6-acetyllysine. The span at 13 to 34 (KGSKKAVTKTQKKGDKKRKKSR) shows a compositional bias: basic residues. Phosphoserine is present on serine 15. N6-acetyllysine is present on residues lysine 16 and lysine 21. Lysine 121 is covalently cross-linked (Glycyl lysine isopeptide (Lys-Gly) (interchain with G-Cter in ubiquitin)).

The protein belongs to the histone H2B family. In terms of assembly, the nucleosome is a histone octamer containing two molecules each of H2A, H2B, H3 and H4 assembled in one H3-H4 heterotetramer and two H2A-H2B heterodimers. The octamer wraps approximately 147 bp of DNA. Monoubiquitination of Lys-121 by the BRE1 gives a specific tag for epigenetic transcriptional activation and is also prerequisite for histone H3 'Lys-4' and 'Lys-79' methylation. In terms of processing, phosphorylated on Ser-15 during apoptosis; which facilitates apoptotic chromatin condensation.

The protein localises to the nucleus. It localises to the chromosome. Functionally, core component of nucleosome. Nucleosomes wrap and compact DNA into chromatin, limiting DNA accessibility to the cellular machineries which require DNA as a template. Histones thereby play a central role in transcription regulation, DNA repair, DNA replication and chromosomal stability. DNA accessibility is regulated via a complex set of post-translational modifications of histones, also called histone code, and nucleosome remodeling. Has broad-spectrum antibacterial activity. May be important in the antimicrobial defenses of chick reproductive system during follicle development in the ovary and egg formation in the oviduct. This is Histone H2B 1/2/3/4/6 (H2B-I) from Gallus gallus (Chicken).